The primary structure comprises 284 residues: Bifunctional protein FolD (284 aa).

NADP(+)-binding positions include 165-167 (GRS) and serine 190.

Belongs to the tetrahydrofolate dehydrogenase/cyclohydrolase family. Homodimer.

It catalyses the reaction (6R)-5,10-methylene-5,6,7,8-tetrahydrofolate + NADP(+) = (6R)-5,10-methenyltetrahydrofolate + NADPH. The enzyme catalyses (6R)-5,10-methenyltetrahydrofolate + H2O = (6R)-10-formyltetrahydrofolate + H(+). Its pathway is one-carbon metabolism; tetrahydrofolate interconversion. Catalyzes the oxidation of 5,10-methylenetetrahydrofolate to 5,10-methenyltetrahydrofolate and then the hydrolysis of 5,10-methenyltetrahydrofolate to 10-formyltetrahydrofolate. This is Bifunctional protein FolD from Streptococcus pyogenes serotype M28 (strain MGAS6180).